Reading from the N-terminus, the 137-residue chain is Small ribosomal subunit protein uS9 (137 aa).

A compositionally biased stretch (basic and acidic residues) spans 105–117 (LKVEGYLTRDPRA). Positions 105–137 (LKVEGYLTRDPRAKERKKYGLRKARKAPQYSKR) are disordered. The span at 118–137 (KERKKYGLRKARKAPQYSKR) shows a compositional bias: basic residues.

The protein belongs to the universal ribosomal protein uS9 family.

The sequence is that of Small ribosomal subunit protein uS9 from Cyanothece sp. (strain PCC 7425 / ATCC 29141).